The following is a 498-amino-acid chain: Succinate-semialdehyde dehydrogenase [NADP(+)] 1 (498 aa).

NAD(+) is bound at residue 247 to 252 (GSTNVG). Residues Glu269 and Cys303 contribute to the active site.

Belongs to the aldehyde dehydrogenase family. In terms of assembly, homotetramer.

It is found in the cytoplasm. It carries out the reaction succinate semialdehyde + NAD(+) + H2O = succinate + NADH + 2 H(+). It catalyses the reaction succinate semialdehyde + NADP(+) + H2O = succinate + NADPH + 2 H(+). Its pathway is amino-acid degradation; 4-aminobutanoate degradation. Functionally, catalyzes the oxidation of succinate semialdehyde to succinate. Can utilize both NAD(+) or NADP(+) as a coenzyme. Functions in a gamma-aminobutyrate (GABA) degradation pathway that allows growth utilizing GABA as a nitrogen source. Functions in the GABA shunt, which allows to bypass 2 reactions in the TCA cycle by removing alpha-ketoglutarate from the cycle and feeding succinate and NADH back into the cycle. The chain is Succinate-semialdehyde dehydrogenase [NADP(+)] 1 (ssd1) from Schizosaccharomyces pombe (strain 972 / ATCC 24843) (Fission yeast).